The following is a 580-amino-acid chain: Threonine--tRNA ligase (580 aa).

Positions 179–476 (DHRKIGKDLN…LLEQTKGILP (298 aa)) are catalytic. Cysteine 272, histidine 323, and histidine 453 together coordinate Zn(2+).

The protein belongs to the class-II aminoacyl-tRNA synthetase family. As to quaternary structure, homodimer. Zn(2+) is required as a cofactor.

The protein resides in the cytoplasm. The catalysed reaction is tRNA(Thr) + L-threonine + ATP = L-threonyl-tRNA(Thr) + AMP + diphosphate + H(+). Functionally, catalyzes the attachment of threonine to tRNA(Thr) in a two-step reaction: L-threonine is first activated by ATP to form Thr-AMP and then transferred to the acceptor end of tRNA(Thr). Also edits incorrectly charged L-seryl-tRNA(Thr). The polypeptide is Threonine--tRNA ligase (Ureaplasma parvum serovar 3 (strain ATCC 27815 / 27 / NCTC 11736)).